The following is a 217-amino-acid chain: Transmembrane protein 247 (217 aa).

Basic and acidic residues predominate over residues 1-10 (MATEDREMME). Residues 1 to 87 (MATEDREMME…GPATTKGQAG (87 aa)) are disordered. A coiled-coil region spans residues 109–154 (RERDAEMELEKVRMEFELKRLKYLHEENERQRQHEEVMEQLQQQAT). Transmembrane regions (helical) follow at residues 165–185 (LLLP…IHII) and 192–212 (IFFL…LCLI).

Its subcellular location is the membrane. The chain is Transmembrane protein 247 from Bos taurus (Bovine).